Reading from the N-terminus, the 483-residue chain is UDP-N-acetylmuramyl-tripeptide synthetase (483 aa).

Ser43 contacts UDP-N-acetyl-alpha-D-muramoyl-L-alanyl-D-glutamate. ATP is bound at residue 116–122 (GTKGKTT). Residues 160 to 161 (TT), Ser187, and Arg195 each bind UDP-N-acetyl-alpha-D-muramoyl-L-alanyl-D-glutamate. Lys229 carries the N6-carboxylysine modification.

This sequence belongs to the MurCDEF family. MurE subfamily. Post-translationally, carboxylation is probably crucial for Mg(2+) binding and, consequently, for the gamma-phosphate positioning of ATP.

It localises to the cytoplasm. It participates in cell wall biogenesis; peptidoglycan biosynthesis. Catalyzes the addition of an amino acid to the nucleotide precursor UDP-N-acetylmuramoyl-L-alanyl-D-glutamate (UMAG) in the biosynthesis of bacterial cell-wall peptidoglycan. The chain is UDP-N-acetylmuramyl-tripeptide synthetase from Lactococcus lactis subsp. cremoris (strain SK11).